Reading from the N-terminus, the 391-residue chain is Glutamate 5-kinase (391 aa).

Lys17 lines the ATP pocket. Substrate-binding residues include Ser57, Asp144, and Asn156. Residues 176–177 (SD) and 216–222 (TGGMTTK) contribute to the ATP site. The 79-residue stretch at 278–356 (QGQIVIDDGA…AWLAAEMGPA (79 aa)) folds into the PUA domain. The tract at residues 370 to 391 (SRRRKAEPSSRNQKSSGSRVTS) is disordered. The span at 378–391 (SSRNQKSSGSRVTS) shows a compositional bias: polar residues.

It belongs to the glutamate 5-kinase family.

It is found in the cytoplasm. The enzyme catalyses L-glutamate + ATP = L-glutamyl 5-phosphate + ADP. Its pathway is amino-acid biosynthesis; L-proline biosynthesis; L-glutamate 5-semialdehyde from L-glutamate: step 1/2. Catalyzes the transfer of a phosphate group to glutamate to form L-glutamate 5-phosphate. The chain is Glutamate 5-kinase from Cutibacterium acnes (strain DSM 16379 / KPA171202) (Propionibacterium acnes).